The sequence spans 120 residues: Large ribosomal subunit protein uL18 (120 aa).

Belongs to the universal ribosomal protein uL18 family. In terms of assembly, part of the 50S ribosomal subunit; part of the 5S rRNA/L5/L18/L25 subcomplex. Contacts the 5S and 23S rRNAs.

In terms of biological role, this is one of the proteins that bind and probably mediate the attachment of the 5S RNA into the large ribosomal subunit, where it forms part of the central protuberance. The protein is Large ribosomal subunit protein uL18 of Agrobacterium fabrum (strain C58 / ATCC 33970) (Agrobacterium tumefaciens (strain C58)).